Reading from the N-terminus, the 297-residue chain is Protoheme IX farnesyltransferase 1 (297 aa).

Transmembrane regions (helical) follow at residues 23 to 43, 45 to 65, 93 to 113, 117 to 137, 145 to 165, 171 to 191, 216 to 236, 241 to 261, and 277 to 297; these read VVVL…RAGV, WSVL…AAAV, LPAL…LLMF, LTAW…TGFL, IVIG…AVSG, PLLL…ALAI, LHIL…YAIH, LYLV…WVLY, and IGYL…LLNL.

It belongs to the UbiA prenyltransferase family. Protoheme IX farnesyltransferase subfamily.

The protein localises to the cell inner membrane. It catalyses the reaction heme b + (2E,6E)-farnesyl diphosphate + H2O = Fe(II)-heme o + diphosphate. It functions in the pathway porphyrin-containing compound metabolism; heme O biosynthesis; heme O from protoheme: step 1/1. In terms of biological role, converts heme B (protoheme IX) to heme O by substitution of the vinyl group on carbon 2 of heme B porphyrin ring with a hydroxyethyl farnesyl side group. The polypeptide is Protoheme IX farnesyltransferase 1 (Pseudomonas putida (strain W619)).